Consider the following 110-residue polypeptide: ATP-dependent Clp protease adapter protein ClpS (110 aa).

Belongs to the ClpS family. As to quaternary structure, binds to the N-terminal domain of the chaperone ClpA.

Its function is as follows. Involved in the modulation of the specificity of the ClpAP-mediated ATP-dependent protein degradation. The protein is ATP-dependent Clp protease adapter protein ClpS of Bartonella quintana (strain Toulouse) (Rochalimaea quintana).